A 137-amino-acid polypeptide reads, in one-letter code: Small ribosomal subunit protein uS12 (137 aa).

The interval Met1–Lys57 is disordered. Asp102 carries the 3-methylthioaspartic acid modification.

Belongs to the universal ribosomal protein uS12 family. In terms of assembly, part of the 30S ribosomal subunit. Contacts proteins S8 and S17. May interact with IF1 in the 30S initiation complex.

In terms of biological role, with S4 and S5 plays an important role in translational accuracy. Its function is as follows. Interacts with and stabilizes bases of the 16S rRNA that are involved in tRNA selection in the A site and with the mRNA backbone. Located at the interface of the 30S and 50S subunits, it traverses the body of the 30S subunit contacting proteins on the other side and probably holding the rRNA structure together. The combined cluster of proteins S8, S12 and S17 appears to hold together the shoulder and platform of the 30S subunit. The sequence is that of Small ribosomal subunit protein uS12 from Streptococcus pneumoniae serotype 2 (strain D39 / NCTC 7466).